The following is a 4423-amino-acid chain: Nonribosomal peptide synthetase 7 (4423 aa).

A condensation 1 region spans residues 572 to 986 (NIYPCTSIQE…LISQDDKNRI (415 aa)). The adenylation 1 stretch occupies residues 1007–1404 (ERIQKQPSAV…GRRDTQVKIR (398 aa)). One can recognise a Carrier 1 domain in the interval 1533 to 1609 (LPLTETEQKL…DLARTIDERN (77 aa)). The residue at position 1570 (S1570) is an O-(pantetheine 4'-phosphoryl)serine. The tract at residues 1657-2066 (EDVYPCTSLQ…QFLDETHHET (410 aa)) is condensation 2. The interval 2102–2499 (RDVAKEQPDS…YIGRMGSEVK (398 aa)) is adenylation 2. Positions 2642–2718 (VPQTRIGKKL…DCARILEADQ (77 aa)) constitute a Carrier 2 domain. The residue at position 2679 (S2679) is an O-(pantetheine 4'-phosphoryl)serine. The tract at residues 2764–3170 (EDVYPCTPMQ…AASASSDDQT (407 aa)) is condensation 3. Residues 3205-3609 (RSLETRPDSQ…GRGDSQIKIR (405 aa)) form an adenylation 3 region. The Carrier 3 domain occupies 3731 to 3804 (TESEYITRTL…KMAVVAQHQT (74 aa)). Residue S3765 is modified to O-(pantetheine 4'-phosphoryl)serine. The tract at residues 3875-4278 (TFVLDAEGDL…SQDEKLALLG (404 aa)) is condensation 4. Residues 4288-4300 (KLTKLQRVNSPKE) are compositionally biased toward polar residues. Residues 4288 to 4312 (KLTKLQRVNSPKEQTLRKDKPTNGV) form a disordered region.

The protein belongs to the NRP synthetase family.

It participates in secondary metabolite biosynthesis. Its function is as follows. Nonribosomal peptide synthetase; part of the gene cluster that mediates the biosynthesis of the lipopeptide fusaristatin A. Fusaristatin A consists of a polyketide chain linked to three amino acid residues glutamine (Gln), dehydroalanine (dehydro-Ala), and beta-aminoisobutyric acid. The biosynthesis starts with formation of a linear polyketide chain by the highly reducing polyketide synthase PKS6. The gene cluster does not contain an acyl-CoA ligase or an acyl-transferase, and it is therefore predicted that the polyketide is transferred directly to the nonribosomal peptide synthetase NRPS7. Modules 1-3 from NRPS7 incorporate dehydro-Ala, Gln, and beta-aminoisobutyric acid in the compound, which is released by cyclization. The beta-aminoisobutyric acid units are most likely not freely available to the NRPS, but can be synthesized from thymine, which requires a dehydrogenase, a monooxygenase, and an aminotransferase. The fusaristatin A cluster contains a cytochrome P450 monooxygenase (FGSG_08207) and an aminotransferase (FGSG_17085), which theoretically can perform two of the enzymatic steps. The enzymes may however also be involved in biosynthesis of dehydroalanine or modification of the polyketide. The dehydro-Ala residue can be a result of cyclization, where serine is dehydrated. The last gene of the cluster encodes a protein with an A/B barrel domain found in variable enzymes, which hampers functional prediction. This chain is Nonribosomal peptide synthetase 7, found in Gibberella zeae (strain ATCC MYA-4620 / CBS 123657 / FGSC 9075 / NRRL 31084 / PH-1) (Wheat head blight fungus).